Reading from the N-terminus, the 84-residue chain is U-scoloptoxin(10)-Er1a (84 aa).

Residues 1-24 form the signal peptide; that stretch reads MSRFCLLFVAFGFVLYFLHMEVTG.

Belongs to the scoloptoxin-10 family. In terms of processing, contains 3 disulfide bonds. As to expression, expressed by the venom gland.

The protein localises to the secreted. This Ethmostigmus rubripes (Giant centipede) protein is U-scoloptoxin(10)-Er1a.